We begin with the raw amino-acid sequence, 366 residues long: Protein FAM110B (366 aa).

Disordered regions lie at residues 127–152 (SSEG…DTTD), 163–182 (KVYP…HVSR), and 216–252 (CSSS…RPSL). Phosphoserine is present on residues Ser-234 and Ser-297. Positions 313–333 (DCEQSQDSNSDLRNDDSANDR) are disordered. Positions 322-331 (SDLRNDDSAN) are enriched in basic and acidic residues.

It belongs to the FAM110 family.

The protein localises to the cytoplasm. It is found in the cytoskeleton. It localises to the microtubule organizing center. Its subcellular location is the centrosome. The chain is Protein FAM110B (Fam110b) from Mus musculus (Mouse).